Reading from the N-terminus, the 425-residue chain is uncharacterized protein (425 aa).

A CHY-type zinc finger spans residues 135–202 (KEQEILGCSH…AAQYCKYCKN (68 aa)). Residues C142, H144, C153, C156, C162, C165, H166, H172, C184, C187, C197, C200, C209, C212, H225, C226, C229, C232, H244, C245, C248, C251, H260, and C262 each coordinate Zn(2+). Residues 204–270 (MGRYYCNKCK…RCIERSTDCN (67 aa)) form a CTCHY-type zinc finger. The RING-type; atypical zinc finger occupies 271–313 (CPICGEYMFNSRERVIFLSCSHPLHQRCHEEYIRTNYRCPTCY).

This is an uncharacterized protein from Schizosaccharomyces pombe (strain 972 / ATCC 24843) (Fission yeast).